The sequence spans 497 residues: Serine/threonine-protein kinase 3 (497 aa).

M1 carries the N-acetylmethionine modification. The tract at residues 1–20 (MEQPPASKSKLKKLSEDSLT) is disordered. Phosphoserine is present on S15. Residues 27–278 (FDVLEKLGEG…ATQLLQHPFI (252 aa)) form the Protein kinase domain. ATP contacts are provided by residues 33-41 (LGEGSYGSV) and K56. Position 117 is a phosphothreonine; by PKB/AKT1 (T117). Residue D146 is the Proton acceptor of the active site. N151 and D164 together coordinate Mg(2+). T180 is modified (phosphothreonine; by autocatalysis). A coiled-coil region spans residues 287–328 (LRDLIAEAMEIKAKRHEEQQRELEEEEENSDEDELDSHTMVK). Disordered regions lie at residues 301-343 (RHEE…TSTM) and 368-394 (NSEE…SPQV). The segment covering 309 to 321 (LEEEEENSDEDEL) has biased composition (acidic residues). At S316 the chain carries Phosphoserine. Positions 326–343 (MVKTSSESVGTMRATSTM) are enriched in polar residues. Phosphothreonine is present on T336. A coiled-coil region spans residues 366–387 (VINSEEEEEEEEEEEEDGTMKR). The segment covering 369 to 382 (SEEEEEEEEEEEED) has biased composition (acidic residues). T384 bears the Phosphothreonine mark. Residue T390 is modified to Phosphothreonine; by PKB/AKT1. Phosphoserine is present on residues S391 and S450. An SARAH domain is found at 443–490 (FDFLKNLSLEELQMRLKALDPMMEREIEELHQRYSAKRQPILDAMDAK). Residues 448-479 (NLSLEELQMRLKALDPMMEREIEELHQRYSAK) adopt a coiled-coil conformation.

It belongs to the protein kinase superfamily. STE Ser/Thr protein kinase family. STE20 subfamily. As to quaternary structure, homodimer; mediated via the coiled-coil region. Interacts with NORE1, which inhibits autoactivation. Interacts with and stabilizes SAV1. Interacts with RAF1, which prevents dimerization and phosphorylation. Interacts with RASSF1. Interacts (via SARAH domain) with isoform 1 of NEK2. Interacts with ESR1 only in the presence of SAV1. Interacts with PKB/AKT1. Forms a tripartite complex with MOBKL1B and STK38. Interacts with RASSF2 (via SARAH domain). Interacts with DLG5 (via PDZ domain 3). Interacts with LATS1; this interaction is inhibited in the presence of DLG5. Interacts with MARK3 in the presence of DLG5. Interacts with RASSF5; this interaction inhibits STK3 autoactivation through heterodimerization. Interacts (when phosphorylated) with SLMAP (via FHA domain); the interaction associates STK3 with the STRIPAK complex. Mg(2+) is required as a cofactor. In terms of processing, autophosphorylated on two residues Thr-174 and Thr-180, leading to activation. Phosphorylation at Thr-117 and Thr-390 by PKB/AKT1, leads to inhibition of its: cleavage, kinase activity, autophosphorylation at Thr-180, binding to RASSF1 and nuclear translocation, and increase in its binding to RAF1. Phosphorylated at Ser-15 by PLK1, leading to activation. Post-translationally, proteolytically cleaved by caspase-3 during apoptosis. Proteolytic cleavage results in kinase activation and nuclear translocation of the truncated form (MST1/N). Ubiquitinated by TRIM69; leading to its redistribution to the perinuclear cytoskeleton.

The protein resides in the cytoplasm. It is found in the nucleus. It catalyses the reaction L-seryl-[protein] + ATP = O-phospho-L-seryl-[protein] + ADP + H(+). It carries out the reaction L-threonyl-[protein] + ATP = O-phospho-L-threonyl-[protein] + ADP + H(+). Its activity is regulated as follows. Inhibited by the C-terminal non-catalytic region. Activated by caspase-cleavage. Full activation also requires homodimerization and autophosphorylation of Thr-180, which are inhibited by the proto-oncogene product RAF1. Activated by RASSF1 which acts by preventing its dephosphorylation. When autophosphorylated at Thr-180, recruits STRIPAK complex and promotes PP2A-mediated dephosphorylation and inactivation of STK3. Functionally, stress-activated, pro-apoptotic kinase which, following caspase-cleavage, enters the nucleus and induces chromatin condensation followed by internucleosomal DNA fragmentation. Key component of the Hippo signaling pathway which plays a pivotal role in organ size control and tumor suppression by restricting proliferation and promoting apoptosis. The core of this pathway is composed of a kinase cascade wherein STK3/MST2 and STK4/MST1, in complex with its regulatory protein SAV1, phosphorylates and activates LATS1/2 in complex with its regulatory protein MOB1, which in turn phosphorylates and inactivates YAP1 oncoprotein and WWTR1/TAZ. Phosphorylation of YAP1 by LATS2 inhibits its translocation into the nucleus to regulate cellular genes important for cell proliferation, cell death, and cell migration. STK3/MST2 and STK4/MST1 are required to repress proliferation of mature hepatocytes, to prevent activation of facultative adult liver stem cells (oval cells), and to inhibit tumor formation. Phosphorylates NKX2-1. Phosphorylates NEK2 and plays a role in centrosome disjunction by regulating the localization of NEK2 to centrosomes, and its ability to phosphorylate CROCC and CEP250. In conjunction with SAV1, activates the transcriptional activity of ESR1 through the modulation of its phosphorylation. Positively regulates RAF1 activation via suppression of the inhibitory phosphorylation of RAF1 on 'Ser-259'. Phosphorylates MOBKL1A and RASSF2. Phosphorylates MOBKL1B on 'Thr-74'. Acts cooperatively with MOBKL1B to activate STK38. This Mus musculus (Mouse) protein is Serine/threonine-protein kinase 3 (Stk3).